The following is a 428-amino-acid chain: Glutamate-1-semialdehyde 2,1-aminomutase (428 aa).

Lysine 265 is subject to N6-(pyridoxal phosphate)lysine.

Belongs to the class-III pyridoxal-phosphate-dependent aminotransferase family. HemL subfamily. In terms of assembly, homodimer. It depends on pyridoxal 5'-phosphate as a cofactor.

The protein resides in the cytoplasm. It carries out the reaction (S)-4-amino-5-oxopentanoate = 5-aminolevulinate. It functions in the pathway porphyrin-containing compound metabolism; protoporphyrin-IX biosynthesis; 5-aminolevulinate from L-glutamyl-tRNA(Glu): step 2/2. In Aeromonas hydrophila subsp. hydrophila (strain ATCC 7966 / DSM 30187 / BCRC 13018 / CCUG 14551 / JCM 1027 / KCTC 2358 / NCIMB 9240 / NCTC 8049), this protein is Glutamate-1-semialdehyde 2,1-aminomutase.